The following is a 582-amino-acid chain: Histone deacetylase 9-B (582 aa).

An interaction with mef2 region spans residues 146 to 195 (SNEVKQKLQEFLLSKSTKDITLNGIPQKITQSSKLWYTASHHTSLEQSSP). Residues 189–205 (SLEQSSPPLGGASSSCK) show a composition bias toward polar residues. Disordered stretches follow at residues 189-254 (SLEQ…KEGN), 270-314 (TASS…QSRL), 409-447 (LSSG…RTQS), and 496-567 (VHLQ…NQSS). 2 stretches are compositionally biased toward basic and acidic residues: residues 213-224 (DYRDDFPLRKTV) and 238-253 (KVAE…RKEG). The span at 270 to 289 (TASSSAPGSGPSSPNGACSA) shows a compositional bias: low complexity. The span at 295–314 (GPSSLPVTTRTERWPSQSRL) shows a compositional bias: polar residues.

This sequence belongs to the histone deacetylase family. HD type 2 subfamily. In terms of assembly, homodimer. Interacts with mef2.

The protein resides in the nucleus. It catalyses the reaction N(6)-acetyl-L-lysyl-[histone] + H2O = L-lysyl-[histone] + acetate. Functionally, devoided of intrinsic deacetylase activity, promotes the deacetylation of lysine residues on the N-terminal part of the core histones (H2A, H2B, H3 and H4) by recruiting other histone deacetylases. Histone deacetylation gives a tag for epigenetic repression and plays an important role in transcriptional regulation, cell cycle progression and developmental events. Represses MEF2-dependent transcription. The chain is Histone deacetylase 9-B (hdac9b) from Danio rerio (Zebrafish).